The primary structure comprises 152 residues: Peptide deformylase (152 aa).

Positions 91 and 133 each coordinate Fe cation. Glutamate 134 is a catalytic residue. Histidine 137 contacts Fe cation.

This sequence belongs to the polypeptide deformylase family. It depends on Fe(2+) as a cofactor.

It catalyses the reaction N-terminal N-formyl-L-methionyl-[peptide] + H2O = N-terminal L-methionyl-[peptide] + formate. Functionally, removes the formyl group from the N-terminal Met of newly synthesized proteins. Requires at least a dipeptide for an efficient rate of reaction. N-terminal L-methionine is a prerequisite for activity but the enzyme has broad specificity at other positions. In Wigglesworthia glossinidia brevipalpis, this protein is Peptide deformylase.